Reading from the N-terminus, the 213-residue chain is Ras-related protein Rab-4B (213 aa).

Position 2 is an N-acetylalanine (A2). Residues G18, T19, G20, K21, S22, and C23 each contribute to the GDP site. Residues G18, T19, G20, K21, S22, C23, S37, H39, and T40 each coordinate GTP. Position 22 (S22) interacts with Mg(2+). Positions 39 to 44 (HTIGVE) match the Switch 1 motif. Mg(2+) is bound by residues T40 and D63. A Switch 2 motif is present at residues 65–74 (AGQERFRSVT). G66 serves as a coordination point for GTP. Q67 bears the 5-glutamyl serotonin mark. N121, K122, D124, A152, and L153 together coordinate GDP. GTP is bound by residues N121, K122, D124, A152, and L153. Phosphoserine occurs at positions 185 and 193. Residues C211 and C213 are each lipidated (S-geranylgeranyl cysteine). C213 carries the cysteine methyl ester modification.

This sequence belongs to the small GTPase superfamily. Rab family. In terms of assembly, interacts (GTP-bound form) with RUFY1; the interaction allows endosomal tethering and fusion. Mg(2+) is required as a cofactor. Serotonylation of Gln-67 by TGM2 during activation and aggregation of platelets leads to constitutive activation of GTPase activity.

The protein localises to the cell membrane. It is found in the early endosome membrane. It carries out the reaction GTP + H2O = GDP + phosphate + H(+). Its activity is regulated as follows. Regulated by guanine nucleotide exchange factors (GEFs) which promote the exchange of bound GDP for free GTP. Regulated by GTPase activating proteins (GAPs) which increase the GTP hydrolysis activity. Inhibited by GDP dissociation inhibitors (GDIs). In terms of biological role, the small GTPases Rab are key regulators of intracellular membrane trafficking, from the formation of transport vesicles to their fusion with membranes. Rabs cycle between an inactive GDP-bound form and an active GTP-bound form that is able to recruit to membranes different set of downstream effectors directly responsible for vesicle formation, movement, tethering and fusion. RAB4B mediates endosomal tethering and fusion through the interaction with RUFY1 and RAB14. Acts as a regulator of platelet alpha-granule release during activation and aggregation of platelets. This chain is Ras-related protein Rab-4B, found in Homo sapiens (Human).